A 178-amino-acid chain; its full sequence is uncharacterized protein (178 aa).

The disordered stretch occupies residues 64–103 (GVSDNTNKTTAKDNVSDKSSENEVAQPKQVTPPVDATGNT). The span at 73 to 84 (TAKDNVSDKSSE) shows a compositional bias: basic and acidic residues.

This is an uncharacterized protein from Acidianus sp. F28 (AFV-2).